Here is a 316-residue protein sequence, read N- to C-terminus: Beta-ketoacyl-[acyl-carrier-protein] synthase III (316 aa).

Catalysis depends on residues cysteine 112 and histidine 243. Positions 244–248 (QANLR) are ACP-binding. Residue asparagine 273 is part of the active site.

Belongs to the thiolase-like superfamily. FabH family. In terms of assembly, homodimer.

It localises to the cytoplasm. The enzyme catalyses malonyl-[ACP] + acetyl-CoA + H(+) = 3-oxobutanoyl-[ACP] + CO2 + CoA. It participates in lipid metabolism; fatty acid biosynthesis. Its function is as follows. Catalyzes the condensation reaction of fatty acid synthesis by the addition to an acyl acceptor of two carbons from malonyl-ACP. Catalyzes the first condensation reaction which initiates fatty acid synthesis and may therefore play a role in governing the total rate of fatty acid production. Possesses both acetoacetyl-ACP synthase and acetyl transacylase activities. Its substrate specificity determines the biosynthesis of branched-chain and/or straight-chain of fatty acids. The chain is Beta-ketoacyl-[acyl-carrier-protein] synthase III from Haemophilus influenzae (strain 86-028NP).